A 446-amino-acid chain; its full sequence is Protein odr-4 homolog (446 aa).

A run of 2 helical transmembrane segments spans residues 81–101 and 424–444; these read MLPG…ELSK and MGVV…FNYF.

It belongs to the ODR-4 family.

The protein resides in the membrane. In terms of biological role, may play a role in the trafficking of a subset of G-protein coupled receptors. The sequence is that of Protein odr-4 homolog (ODR4) from Gallus gallus (Chicken).